The primary structure comprises 707 residues: Protein kinase C theta type (707 aa).

The C2 domain occupies 1 to 107 (MSPFLRIGLS…KNNGRTEIWL (107 aa)). Residue Tyr90 is modified to Phosphotyrosine; by LCK. The Phorbol-ester/DAG-type 1 zinc finger occupies 159–209 (CHEFTATFFPQPTFCSVCHEFVWGLNKQGYQCRRCNAAIHKKCIDKVIAKC). Thr219 bears the Phosphothreonine; by autocatalysis mark. A Phorbol-ester/DAG-type 2 zinc finger spans residues 231 to 281 (PHRFKVYNYKSPTFCEHCGTLLWGLARQGLKCDACGMNVHHRCQTKVANLC). Position 348 is a phosphoserine (Ser348). In terms of domain architecture, Protein kinase spans 380-634 (FILHKMLGKG…RGDIRQHPLF (255 aa)). ATP-binding positions include 386–394 (LGKGSFGKV) and Lys409. Asp504 acts as the Proton acceptor in catalysis. Thr538 is modified (phosphothreonine; by PDPK1). The 72-residue stretch at 635–706 (REINWEELER…INPGMETLIC (72 aa)) folds into the AGC-kinase C-terminal domain. Ser676 and Ser685 each carry phosphoserine. The residue at position 695 (Ser695) is a Phosphoserine; by autocatalysis.

The protein belongs to the protein kinase superfamily. AGC Ser/Thr protein kinase family. PKC subfamily. In terms of assembly, part of a membrane raft complex composed at least of BCL10, CARD11, MALT1 and IKBKB. Interacts with GLRX3 (via N-terminus). Interacts with ECT2. Interacts with CCDC88A/GIV; the interaction leads to phosphorylation of CCDC88A and inhibition of its guanine nucleotide exchange factor activity. Interacts with CD28. It depends on Mg(2+) as a cofactor. Autophosphorylation at Thr-219 is required for targeting to the TCR and cellular function of PRKCQ upon antigen receptor ligation. Following TCR stimulation, phosphorylated at Tyr-90 and Ser-685.

Its subcellular location is the cytoplasm. It is found in the cell membrane. It catalyses the reaction L-seryl-[protein] + ATP = O-phospho-L-seryl-[protein] + ADP + H(+). It carries out the reaction L-threonyl-[protein] + ATP = O-phospho-L-threonyl-[protein] + ADP + H(+). Novel PKCs (PRKCD, PRKCE, PRKCH and PRKCQ) are calcium-insensitive, but activated by diacylglycerol (DAG) and phosphatidylserine. Three specific sites; Thr-538 (activation loop of the kinase domain), Ser-676 (turn motif) and Ser-695 (hydrophobic region), need to be phosphorylated for its full activation. Functionally, calcium-independent, phospholipid- and diacylglycerol (DAG)-dependent serine/threonine-protein kinase that mediates non-redundant functions in T-cell receptor (TCR) signaling, including T-cells activation, proliferation, differentiation and survival, by mediating activation of multiple transcription factors such as NF-kappa-B, JUN, NFATC1 and NFATC2. In TCR-CD3/CD28-co-stimulated T-cells, is required for the activation of NF-kappa-B and JUN, which in turn are essential for IL2 production, and participates in the calcium-dependent NFATC1 and NFATC2 transactivation. Mediates the activation of the canonical NF-kappa-B pathway (NFKB1) by direct phosphorylation of CARD11 on several serine residues, inducing CARD11 association with lipid rafts and recruitment of the BCL10-MALT1 complex, which then activates IKK complex, resulting in nuclear translocation and activation of NFKB1. May also play an indirect role in activation of the non-canonical NF-kappa-B (NFKB2) pathway. In the signaling pathway leading to JUN activation, acts by phosphorylating the mediator STK39/SPAK and may not act through MAP kinases signaling. Plays a critical role in TCR/CD28-induced NFATC1 and NFATC2 transactivation by participating in the regulation of reduced inositol 1,4,5-trisphosphate generation and intracellular calcium mobilization. After costimulation of T-cells through CD28 can phosphorylate CBLB and is required for the ubiquitination and subsequent degradation of CBLB, which is a prerequisite for the activation of TCR. During T-cells differentiation, plays an important role in the development of T-helper 2 (Th2) cells following immune and inflammatory responses, and, in the development of inflammatory autoimmune diseases, is necessary for the activation of IL17-producing Th17 cells. May play a minor role in Th1 response. Upon TCR stimulation, mediates T-cell protective survival signal by phosphorylating BAD, thus protecting T-cells from BAD-induced apoptosis, and by up-regulating BCL-X(L)/BCL2L1 levels through NF-kappa-B and JUN pathways. In platelets, regulates signal transduction downstream of the ITGA2B, CD36/GP4, F2R/PAR1 and F2RL3/PAR4 receptors, playing a positive role in 'outside-in' signaling and granule secretion signal transduction. May relay signals from the activated ITGA2B receptor by regulating the uncoupling of WASP and WIPF1, thereby permitting the regulation of actin filament nucleation and branching activity of the Arp2/3 complex. May mediate inhibitory effects of free fatty acids on insulin signaling by phosphorylating IRS1, which in turn blocks IRS1 tyrosine phosphorylation and downstream activation of the PI3K/AKT pathway. Phosphorylates MSN (moesin) in the presence of phosphatidylglycerol or phosphatidylinositol. Phosphorylates PDPK1 at 'Ser-504' and 'Ser-532' and negatively regulates its ability to phosphorylate PKB/AKT1. Phosphorylates CCDC88A/GIV and inhibits its guanine nucleotide exchange factor activity. Phosphorylates and activates LRRK1, which phosphorylates RAB proteins involved in intracellular trafficking. The polypeptide is Protein kinase C theta type (Prkcq) (Rattus norvegicus (Rat)).